The following is a 137-amino-acid chain: Drosulfakinins (137 aa).

A signal peptide spans 1 to 31 (MGLRSCTHFATLVIPLWALAFCFLVVVPVPA). Residues 32 to 74 (QTNLQTSKGDRRLQDLESNMGAESDQPNANLVRPSLSRFGDKR) constitute a propeptide that is removed on maturation. Residue phenylalanine 81 is modified to Phenylalanine amide. The propeptide occupies 85-107 (VPRPMIPIELDLLMDNDDENTKA). A Sulfotyrosine modification is found at tyrosine 113. Position 118 is a phenylalanine amide (phenylalanine 118). Tyrosine 130 is subject to Sulfotyrosine. At phenylalanine 135 the chain carries Phenylalanine amide.

Belongs to the gastrin/cholecystokinin family.

The protein resides in the secreted. Functionally, drosulfakinin-0 (DSK 0) plays diverse biological roles including regulating gut muscle contraction in adults but not in larvae. The polypeptide is Drosulfakinins (Drosophila yakuba (Fruit fly)).